The sequence spans 744 residues: Adenosylcobalamin-dependent ribonucleoside-triphosphate reductase (744 aa).

Cys120 and Cys424 are oxidised to a cystine. The tract at residues 148 to 159 (SMPFSFLFDQLM) is effector region-1. The effector region-2 stretch occupies residues 169–318 (VDENINQIPK…ICNLIGKTVV (150 aa)). Active-site residues include Cys413 and Glu415. The interval 570-631 (FHYSGYLIQR…SDNFASAGTV (62 aa)) is adenosylcobalamin-binding-1. The segment at 690–729 (LKQAPKEPISKEKYEKADNHITGNVEIVFEQTNEDQKGLE) is adenosylcobalamin-binding-2.

The protein belongs to the class II ribonucleoside-triphosphate reductase family. Monomer. It depends on adenosylcob(III)alamin as a cofactor.

The enzyme catalyses a 2'-deoxyribonucleoside 5'-triphosphate + [thioredoxin]-disulfide + H2O = a ribonucleoside 5'-triphosphate + [thioredoxin]-dithiol. Allosterically regulated by ATP and dNTP. This is Adenosylcobalamin-dependent ribonucleoside-triphosphate reductase (rtpR) from Lactobacillus gasseri (strain ATCC 33323 / DSM 20243 / BCRC 14619 / CIP 102991 / JCM 1131 / KCTC 3163 / NCIMB 11718 / NCTC 13722 / AM63).